We begin with the raw amino-acid sequence, 416 residues long: Gamma-glutamyl phosphate reductase (416 aa).

Belongs to the gamma-glutamyl phosphate reductase family.

The protein resides in the cytoplasm. It catalyses the reaction L-glutamate 5-semialdehyde + phosphate + NADP(+) = L-glutamyl 5-phosphate + NADPH + H(+). Its pathway is amino-acid biosynthesis; L-proline biosynthesis; L-glutamate 5-semialdehyde from L-glutamate: step 2/2. In terms of biological role, catalyzes the NADPH-dependent reduction of L-glutamate 5-phosphate into L-glutamate 5-semialdehyde and phosphate. The product spontaneously undergoes cyclization to form 1-pyrroline-5-carboxylate. The protein is Gamma-glutamyl phosphate reductase of Vibrio vulnificus (strain YJ016).